We begin with the raw amino-acid sequence, 156 residues long: Ribonuclease pancreatic (156 aa).

The N-terminal stretch at 1–28 (MALEKSLALLPLLVLVLLVLGWVQPSLG) is a signal peptide. Positions 35 and 38 each coordinate substrate. Residue His-40 is the Proton acceptor of the active site. 4 cysteine pairs are disulfide-bonded: Cys-54–Cys-112, Cys-68–Cys-123, Cys-86–Cys-138, and Cys-93–Cys-100. Asn-62 is a glycosylation site (N-linked (GlcNAc...) asparagine). Substrate is bound at residue 69-73 (KPVNT). N-linked (GlcNAc...) asparagine glycosylation occurs at Asn-90. The substrate site is built by Lys-94 and Arg-113. Catalysis depends on His-147, which acts as the Proton donor.

This sequence belongs to the pancreatic ribonuclease family. Monomer. Interacts with and forms tight 1:1 complexes with RNH1. Dimerization of two such complexes may occur. Interaction with RNH1 inhibits this protein.

Its subcellular location is the secreted. The catalysed reaction is an [RNA] containing cytidine + H2O = an [RNA]-3'-cytidine-3'-phosphate + a 5'-hydroxy-ribonucleotide-3'-[RNA].. It carries out the reaction an [RNA] containing uridine + H2O = an [RNA]-3'-uridine-3'-phosphate + a 5'-hydroxy-ribonucleotide-3'-[RNA].. Its function is as follows. Endonuclease that catalyzes the cleavage of RNA on the 3' side of pyrimidine nucleotides. Acts on single-stranded and double-stranded RNA. In Lagothrix lagotricha (Brown woolly monkey), this protein is Ribonuclease pancreatic (RNASE1).